The primary structure comprises 379 residues: Chaperone protein DnaJ (379 aa).

Residues 7 to 72 (CYYETLEVER…DKRAAYDRYG (66 aa)) form the J domain. A CR-type zinc finger spans residues 135 to 213 (GKTAQIEIPV…CTGSGRVTKE (79 aa)). Residues cysteine 148, cysteine 151, cysteine 165, cysteine 168, cysteine 187, cysteine 190, cysteine 201, and cysteine 204 each coordinate Zn(2+). CXXCXGXG motif repeat units lie at residues 148-155 (CEACSGTG), 165-172 (CSTCGGAG), 187-194 (CPSCQGRG), and 201-208 (CPSCTGSG).

The protein belongs to the DnaJ family. In terms of assembly, homodimer. Zn(2+) serves as cofactor.

It localises to the cytoplasm. Functionally, participates actively in the response to hyperosmotic and heat shock by preventing the aggregation of stress-denatured proteins and by disaggregating proteins, also in an autonomous, DnaK-independent fashion. Unfolded proteins bind initially to DnaJ; upon interaction with the DnaJ-bound protein, DnaK hydrolyzes its bound ATP, resulting in the formation of a stable complex. GrpE releases ADP from DnaK; ATP binding to DnaK triggers the release of the substrate protein, thus completing the reaction cycle. Several rounds of ATP-dependent interactions between DnaJ, DnaK and GrpE are required for fully efficient folding. Also involved, together with DnaK and GrpE, in the DNA replication of plasmids through activation of initiation proteins. The chain is Chaperone protein DnaJ from Rhodopseudomonas palustris (strain ATCC BAA-98 / CGA009).